Consider the following 367-residue polypeptide: 2-aminoethylphosphonate--pyruvate transaminase (367 aa).

Residue lysine 194 is modified to N6-(pyridoxal phosphate)lysine.

This sequence belongs to the class-V pyridoxal-phosphate-dependent aminotransferase family. PhnW subfamily. As to quaternary structure, homodimer. Requires pyridoxal 5'-phosphate as cofactor.

The catalysed reaction is (2-aminoethyl)phosphonate + pyruvate = phosphonoacetaldehyde + L-alanine. In terms of biological role, involved in phosphonate degradation. This is 2-aminoethylphosphonate--pyruvate transaminase from Salmonella gallinarum (strain 287/91 / NCTC 13346).